Here is a 1580-residue protein sequence, read N- to C-terminus: Dynamin-binding protein (1580 aa).

N-acetylmethionine is present on Met1. SH3 domains are found at residues 2–61 (EPGS…IVTI), 66–127 (EGER…ELCL), and 146–205 (YSLG…LLGP). Disordered regions lie at residues 211–245 (ESVNSRSGDDSAVNGEVDVPPEEAESGGDEDDQQS), 304–446 (NRTE…LVPL), 500–546 (YAQK…DSLD), and 589–688 (RGSS…AQTF). Acidic residues predominate over residues 229–243 (VPPEEAESGGDEDDQ). Residues 244–303 (QSGTYGIALYRFQALETNELDFEVGDRIQILGTLEDGWLEGCLKGKTGVFPHRFVKLCPS) form the SH3 4 domain. Composition is skewed to polar residues over residues 422 to 439 (QKSQHYLTAGGSHQTSDP) and 502 to 513 (QKHQTSTENTAS). Residues 516-527 (DPPERPERRPGL) are compositionally biased toward basic and acidic residues. Pro residues predominate over residues 608–617 (RPPPPRPRTP). Residues 671–682 (APEKEDSEHMEK) are compositionally biased toward basic and acidic residues. A Phosphoserine modification is found at Ser683. Residues 694 to 755 (LARIRDVEQD…LELQQLRDMT (62 aa)) are a coiled coil. The 188-residue stretch at 783-970 (KRAKVVAELL…KEINVNINEY (188 aa)) folds into the DH domain. Residues 1011–1220 (LKHLTGFAPQ…LKATDREGNL (210 aa)) form the BAR domain. Residues 1288–1351 (PPEKLFHVQR…YSSFLKPYNP (64 aa)) form the SH3 5 domain. Over residues 1356–1365 (SDASVASHSS) the composition is skewed to low complexity. Disordered stretches follow at residues 1356–1384 (SDASVASHSSTESEHSGSSPGCHRQNSHS) and 1426–1514 (TGHP…GSSE). The span at 1426 to 1440 (TGHPETGPSTCSSDP) shows a compositional bias: polar residues. In terms of domain architecture, SH3 6 spans 1516–1579 (EGNQVYFAIY…PSNYIRKTEY (64 aa)).

As to quaternary structure, binds DNM1 via its N-terminal SH3 domains. The C-terminal SH3 domain binds a complex containing actin, tubulin, Hsp70 and actin-regulatory proteins, such as ENAH, EVL, WIRE, CR16, WAVE1 and NAP1L1. Interacts with FASLG. Interacts (via SH3 domain 6) with WASL. Interacts (via SH3 domain 6) interacts with ENAH. Interacts (via C-terminal domain) with TJP1; required for the apical cell-cell junction localization of DNMBP.

It localises to the cytoplasm. The protein resides in the golgi apparatus. It is found in the golgi stack. Its subcellular location is the cytoskeleton. The protein localises to the synapse. It localises to the cell junction. Functionally, plays a critical role as a guanine nucleotide exchange factor (GEF) for CDC42 in several intracellular processes associated with the actin and microtubule cytoskeleton. Regulates the structure of apical junctions in epithelial cells. Participates in the normal lumenogenesis of epithelial cell cysts by regulating spindle orientation. Plays a role in ciliogenesis. May play a role in membrane trafficking between the cell surface and the Golgi. This chain is Dynamin-binding protein, found in Mus musculus (Mouse).